The chain runs to 426 residues: MNIISVGVNHKTAPIEIRERISLSEVQNKEFITGLVSSGLAHEAMVLSTCNRTELYVVPAMHEVTGEFLKEYLISYRDARKEVRPEHFFSRFYCSTARHLFEVASAIDSLVLGEGQILGQVKNAYRIAAEAQCAGIMITRLCHTAFSVAKKVKTKTRIMEGAVSVSYAAVELAQKIFSNLSLKKVLLVGAGETGELAAKHMFAKNARNIVITNRTISKAEALAEELGTNQVLPYESYKEHLHEFDIIITAVSTKDYALTEADMQPAMARRKLKPVIILDLGLPRNVDPNISKLQNMFLKDIDDLKHIIDKNLEKRRRELPKVHAIIEEELIAFGQWINTLKVRPTIVDLQSKFIEIKEKELERYRYKVSEEELQRMEHLTDRILKKILHHPIKMLKAPIDTTDSIPSRVNLVRNVFDLEEPNQSHF.

Substrate contacts are provided by residues 49–52 (TCNR), Ser109, 114–116 (EGQ), and Gln120. Cys50 functions as the Nucleophile in the catalytic mechanism. 189–194 (GAGETG) serves as a coordination point for NADP(+).

It belongs to the glutamyl-tRNA reductase family. Homodimer.

The enzyme catalyses (S)-4-amino-5-oxopentanoate + tRNA(Glu) + NADP(+) = L-glutamyl-tRNA(Glu) + NADPH + H(+). It functions in the pathway porphyrin-containing compound metabolism; protoporphyrin-IX biosynthesis; 5-aminolevulinate from L-glutamyl-tRNA(Glu): step 1/2. The protein operates within porphyrin-containing compound metabolism; chlorophyll biosynthesis. In terms of biological role, catalyzes the NADPH-dependent reduction of glutamyl-tRNA(Glu) to glutamate 1-semialdehyde (GSA). The sequence is that of Glutamyl-tRNA reductase from Chlorobium chlorochromatii (strain CaD3).